Reading from the N-terminus, the 105-residue chain is uncharacterized protein (105 aa).

This is an uncharacterized protein from Rickettsia conorii (strain ATCC VR-613 / Malish 7).